Consider the following 219-residue polypeptide: 2-hydroxy-3-keto-5-methylthiopentenyl-1-phosphate phosphatase (219 aa).

The protein belongs to the HAD-like hydrolase superfamily. MtnX family.

The enzyme catalyses 2-hydroxy-5-methylsulfanyl-3-oxopent-1-enyl phosphate + H2O = 1,2-dihydroxy-5-(methylsulfanyl)pent-1-en-3-one + phosphate. Its pathway is amino-acid biosynthesis; L-methionine biosynthesis via salvage pathway; L-methionine from S-methyl-5-thio-alpha-D-ribose 1-phosphate: step 4/6. Dephosphorylates 2-hydroxy-3-keto-5-methylthiopentenyl-1-phosphate (HK-MTPenyl-1-P) yielding 1,2-dihydroxy-3-keto-5-methylthiopentene (DHK-MTPene). The protein is 2-hydroxy-3-keto-5-methylthiopentenyl-1-phosphate phosphatase of Bacillus thuringiensis subsp. konkukian (strain 97-27).